A 258-amino-acid polypeptide reads, in one-letter code: Large ribosomal subunit protein bL19m (258 aa).

The interval 235–258 (SKGLTGGVGGGGGKQKGQESKKKN) is disordered. Residues 238 to 249 (LTGGVGGGGGKQ) are compositionally biased toward gly residues.

It belongs to the bacterial ribosomal protein bL19 family. As to quaternary structure, component of the mitochondrial large ribosomal subunit (mt-LSU). Mature N.crassa 74S mitochondrial ribosomes consist of a small (37S) and a large (54S) subunit. The 37S small subunit contains a 16S ribosomal RNA (16S mt-rRNA) and 32 different proteins. The 54S large subunit contains a 23S rRNA (23S mt-rRNA) and 42 different proteins.

It localises to the mitochondrion. Its function is as follows. Component of the mitochondrial ribosome (mitoribosome), a dedicated translation machinery responsible for the synthesis of mitochondrial genome-encoded proteins, including at least some of the essential transmembrane subunits of the mitochondrial respiratory chain. The mitoribosomes are attached to the mitochondrial inner membrane and translation products are cotranslationally integrated into the membrane. The sequence is that of Large ribosomal subunit protein bL19m (img1) from Neurospora crassa (strain ATCC 24698 / 74-OR23-1A / CBS 708.71 / DSM 1257 / FGSC 987).